A 933-amino-acid chain; its full sequence is 2-oxoglutarate dehydrogenase E1 component (933 aa).

It belongs to the alpha-ketoglutarate dehydrogenase family. Homodimer. Part of the 2-oxoglutarate dehydrogenase (OGDH) complex composed of E1 (2-oxoglutarate dehydrogenase), E2 (dihydrolipoamide succinyltransferase) and E3 (dihydrolipoamide dehydrogenase); the complex contains multiple copies of the three enzymatic components (E1, E2 and E3). Interacts (via N-terminus) with SucB, the E2 component of OGDH complex. Thiamine diphosphate is required as a cofactor.

The enzyme catalyses N(6)-[(R)-lipoyl]-L-lysyl-[protein] + 2-oxoglutarate + H(+) = N(6)-[(R)-S(8)-succinyldihydrolipoyl]-L-lysyl-[protein] + CO2. Its function is as follows. E1 component of the 2-oxoglutarate dehydrogenase (OGDH) complex which catalyzes the decarboxylation of 2-oxoglutarate, the first step in the conversion of 2-oxoglutarate to succinyl-CoA and CO(2). In Escherichia coli O157:H7, this protein is 2-oxoglutarate dehydrogenase E1 component (sucA).